Consider the following 377-residue polypeptide: Succinyl-diaminopimelate desuccinylase (377 aa).

Histidine 68 is a binding site for Zn(2+). Aspartate 70 is a catalytic residue. Aspartate 101 is a Zn(2+) binding site. The Proton acceptor role is filled by glutamate 135. Residues glutamate 136, glutamate 164, and histidine 350 each contribute to the Zn(2+) site.

Belongs to the peptidase M20A family. DapE subfamily. In terms of assembly, homodimer. It depends on Zn(2+) as a cofactor. Requires Co(2+) as cofactor.

It catalyses the reaction N-succinyl-(2S,6S)-2,6-diaminopimelate + H2O = (2S,6S)-2,6-diaminopimelate + succinate. Its pathway is amino-acid biosynthesis; L-lysine biosynthesis via DAP pathway; LL-2,6-diaminopimelate from (S)-tetrahydrodipicolinate (succinylase route): step 3/3. Its function is as follows. Catalyzes the hydrolysis of N-succinyl-L,L-diaminopimelic acid (SDAP), forming succinate and LL-2,6-diaminopimelate (DAP), an intermediate involved in the bacterial biosynthesis of lysine and meso-diaminopimelic acid, an essential component of bacterial cell walls. This is Succinyl-diaminopimelate desuccinylase from Acinetobacter baumannii (strain AB0057).